The primary structure comprises 360 residues: Malonyl CoA-acyl carrier protein transacylase, mitochondrial (360 aa).

A mitochondrion-targeting transit peptide spans 1–24 (MKLLTFPGQGTSISISILKAIIRN). Catalysis depends on residues S105 and H235.

It belongs to the FabD family.

Its subcellular location is the mitochondrion. The catalysed reaction is holo-[ACP] + malonyl-CoA = malonyl-[ACP] + CoA. Its pathway is lipid metabolism; fatty acid biosynthesis. Its function is as follows. Involved in biosynthesis of fatty acids in mitochondria. This Saccharomyces cerevisiae (strain ATCC 204508 / S288c) (Baker's yeast) protein is Malonyl CoA-acyl carrier protein transacylase, mitochondrial (MCT1).